Consider the following 244-residue polypeptide: Ribosomal RNA large subunit methyltransferase E (244 aa).

Gly81, Trp83, Asp109, Asp125, and Asp149 together coordinate S-adenosyl-L-methionine. The active-site Proton acceptor is Lys189.

This sequence belongs to the class I-like SAM-binding methyltransferase superfamily. RNA methyltransferase RlmE family.

The protein resides in the cytoplasm. The catalysed reaction is uridine(2552) in 23S rRNA + S-adenosyl-L-methionine = 2'-O-methyluridine(2552) in 23S rRNA + S-adenosyl-L-homocysteine + H(+). Functionally, specifically methylates the uridine in position 2552 of 23S rRNA at the 2'-O position of the ribose in the fully assembled 50S ribosomal subunit. This chain is Ribosomal RNA large subunit methyltransferase E, found in Cereibacter sphaeroides (strain ATCC 17023 / DSM 158 / JCM 6121 / CCUG 31486 / LMG 2827 / NBRC 12203 / NCIMB 8253 / ATH 2.4.1.) (Rhodobacter sphaeroides).